The sequence spans 496 residues: Cytochrome P450 3A56 (496 aa).

Position 441 (Cys441) interacts with heme.

Belongs to the cytochrome P450 family. It depends on heme as a cofactor. As to expression, highly expressed in liver and intestine. Moderate expression in gill and spleen. Low expression in kidney, brain and heart.

The protein resides in the endoplasmic reticulum membrane. It is found in the microsome membrane. The catalysed reaction is an organic molecule + reduced [NADPH--hemoprotein reductase] + O2 = an alcohol + oxidized [NADPH--hemoprotein reductase] + H2O + H(+). Functionally, putative steroid 6-beta-hydroxylase. This chain is Cytochrome P450 3A56 (cyp3a56), found in Fundulus heteroclitus (Killifish).